Here is a 335-residue protein sequence, read N- to C-terminus: Tryptophan--tRNA ligase (335 aa).

ATP-binding positions include 13–15 (QPS) and 21–22 (GN). Positions 14–22 (PSGELTIGN) match the 'HIGH' region motif. Asp-138 serves as a coordination point for L-tryptophan. ATP contacts are provided by residues 150–152 (GKD), Ile-189, and 198–202 (KMSKS). The short motif at 198-202 (KMSKS) is the 'KMSKS' region element.

The protein belongs to the class-I aminoacyl-tRNA synthetase family. As to quaternary structure, homodimer.

The protein localises to the cytoplasm. It catalyses the reaction tRNA(Trp) + L-tryptophan + ATP = L-tryptophyl-tRNA(Trp) + AMP + diphosphate + H(+). Functionally, catalyzes the attachment of tryptophan to tRNA(Trp). The protein is Tryptophan--tRNA ligase of Clostridium acetobutylicum (strain ATCC 824 / DSM 792 / JCM 1419 / IAM 19013 / LMG 5710 / NBRC 13948 / NRRL B-527 / VKM B-1787 / 2291 / W).